A 98-amino-acid chain; its full sequence is Protein translation factor SUI1 homolog (98 aa).

This sequence belongs to the SUI1 family.

The chain is Protein translation factor SUI1 homolog from Thermococcus kodakarensis (strain ATCC BAA-918 / JCM 12380 / KOD1) (Pyrococcus kodakaraensis (strain KOD1)).